We begin with the raw amino-acid sequence, 396 residues long: Elongation factor Tu (396 aa).

The tr-type G domain occupies 10 to 206 (KPHVNVGTIG…ALDSYIPTPE (197 aa)). A G1 region spans residues 19 to 26 (GHVDHGKT). 19–26 (GHVDHGKT) is a binding site for GTP. Mg(2+) is bound at residue Thr26. Residues 60–64 (GITIN) form a G2 region. Residues 81-84 (DCPG) form a G3 region. GTP contacts are provided by residues 81–85 (DCPGH) and 136–139 (NKCD). The tract at residues 136–139 (NKCD) is G4. A G5 region spans residues 174–176 (SAK).

This sequence belongs to the TRAFAC class translation factor GTPase superfamily. Classic translation factor GTPase family. EF-Tu/EF-1A subfamily. As to quaternary structure, monomer.

The protein resides in the cytoplasm. It catalyses the reaction GTP + H2O = GDP + phosphate + H(+). In terms of biological role, GTP hydrolase that promotes the GTP-dependent binding of aminoacyl-tRNA to the A-site of ribosomes during protein biosynthesis. This chain is Elongation factor Tu, found in Ralstonia nicotianae (strain ATCC BAA-1114 / GMI1000) (Ralstonia solanacearum).